A 348-amino-acid polypeptide reads, in one-letter code: Large ribosomal subunit protein uL3m (348 aa).

The transit peptide at 1-40 (MPGWRLLAQAGARVLGCGARGLGADPGLERRKNILFFVRN) directs the protein to the mitochondrion.

Belongs to the universal ribosomal protein uL3 family. As to quaternary structure, component of the mitochondrial ribosome large subunit (39S) which comprises a 16S rRNA and about 50 distinct proteins.

It is found in the mitochondrion. This is Large ribosomal subunit protein uL3m (Mrpl3) from Mus musculus (Mouse).